A 1153-amino-acid polypeptide reads, in one-letter code: Protein unc-13 homolog 4B (1153 aa).

A disordered region spans residues 54–84 (VLKSSLAPLEENGSGGEEDSDESPDGTLQLS). In terms of domain architecture, C2 1 spans 162-288 (ATHEEIYEAA…MKEIAVTASS (127 aa)). Asp-195, Asp-201, Asp-252, Phe-253, and Asp-254 together coordinate Ca(2+). An MHD1 domain is found at 637 to 755 (FEVYLILKRY…RCCIFYAQQM (119 aa)). Positions 869-975 (SNSMDQLMMY…LETSDLIHQY (107 aa)) constitute an MHD2 domain. Residues 990 to 1114 (PYGQLTITAQ…EATPPGEQIM (125 aa)) form the C2 2 domain. Positions 1019, 1025, 1083, and 1085 each coordinate Ca(2+).

This sequence belongs to the unc-13 family. As to quaternary structure, interacts with Cam. Requires Ca(2+) as cofactor.

It is found in the cytoplasm. It localises to the cytoskeleton. The protein resides in the cell projection. Its subcellular location is the filopodium. The protein localises to the late endosome. It is found in the lysosome. Its function is as follows. Essential for tracheal development in embryos. Functions with the GTPase Rab39 and downstream of dnd, to regulate lumen fusion between previously separate tracheal branches (anastomosis). Essential component of secretory lysosome-related organelles (SLs) that are present in the tracheal fusion tip cells (FCs). Mediates intracellular fusion of the extending tracheal stalk cell lumen in the FCs by recruiting the SNARE complex component Syx1A to the SLs, this may then enable the SLs to interact with complementary SNAREs (such as Syb) present in the apical membrane of the FC-FC interface and the membranes of the separate tracheal stalk cells. May also function in the maturation and exocytosis of the SLs. This is Protein unc-13 homolog 4B from Drosophila melanogaster (Fruit fly).